The chain runs to 1379 residues: DNA-directed RNA polymerase subunit beta (1379 aa).

It belongs to the RNA polymerase beta chain family. As to quaternary structure, the RNAP catalytic core consists of 2 alpha, 1 beta, 1 beta' and 1 omega subunit. When a sigma factor is associated with the core the holoenzyme is formed, which can initiate transcription.

It carries out the reaction RNA(n) + a ribonucleoside 5'-triphosphate = RNA(n+1) + diphosphate. Its function is as follows. DNA-dependent RNA polymerase catalyzes the transcription of DNA into RNA using the four ribonucleoside triphosphates as substrates. This is DNA-directed RNA polymerase subunit beta from Ruegeria sp. (strain TM1040) (Silicibacter sp.).